A 177-amino-acid polypeptide reads, in one-letter code: Large ribosomal subunit protein uL6 (177 aa).

The protein belongs to the universal ribosomal protein uL6 family. Part of the 50S ribosomal subunit.

Its function is as follows. This protein binds to the 23S rRNA, and is important in its secondary structure. It is located near the subunit interface in the base of the L7/L12 stalk, and near the tRNA binding site of the peptidyltransferase center. This is Large ribosomal subunit protein uL6 from Methylocella silvestris (strain DSM 15510 / CIP 108128 / LMG 27833 / NCIMB 13906 / BL2).